Here is a 342-residue protein sequence, read N- to C-terminus: C-X-C chemokine receptor type 6 (342 aa).

At 1 to 32 the chain is on the extracellular side; the sequence is MAEHDYHEDYGFNSFNDSSQEEHQDFLQFSKV. The N-linked (GlcNAc...) asparagine glycan is linked to N16. The chain crosses the membrane as a helical span at residues 33–59; sequence FLPCMYLVVFVCGLVGNSLVLVISIFY. The Cytoplasmic portion of the chain corresponds to 60–68; that stretch reads HKLQSLTDV. A helical transmembrane segment spans residues 69–89; the sequence is FLVNLPLADLVFVCTLPFWAY. The Extracellular portion of the chain corresponds to 90–103; that stretch reads AGIHEWVFGQVMCK. Cysteines 102 and 180 form a disulfide. A helical membrane pass occupies residues 104–125; it reads SLLGIYTINFYTSMLILTCITV. At 126-143 the chain is on the cytoplasmic side; it reads DRFIVVVKATKAYNQQAK. Residues 144-164 form a helical membrane-spanning segment; that stretch reads RMTWGKVTSLLIWVISLLVSL. The Extracellular portion of the chain corresponds to 165-187; it reads PQIIYGNVFNLDKLICGYHDEAI. The helical transmembrane segment at 188–215 threads the bilayer; the sequence is STVVLATQMTLGFFLPLLTMIVCYSVII. Residues 216 to 231 lie on the Cytoplasmic side of the membrane; the sequence is KTLLHAGGFQKHRSLK. Residues 232-259 form a helical membrane-spanning segment; sequence IIFLVMAVFLLTQMPFNLMKLIRSTHWE. At 260-275 the chain is on the extracellular side; it reads YYAMTSFHYTIMVTEA. The chain crosses the membrane as a helical span at residues 276 to 293; it reads IAYLRACLNPVLYAFVSL. Residues 294–342 are Cytoplasmic-facing; it reads KFRKNFWKLVKDIGCLPYLGVSHQWKSSEDNSKTFSASHNVEATSMFQL.

This sequence belongs to the G-protein coupled receptor 1 family.

It is found in the cell membrane. Receptor for the C-X-C chemokine CXCL16. Used as a coreceptor by SIVs and by strains of HIV-2 and m-tropic HIV-1. This is C-X-C chemokine receptor type 6 (CXCR6) from Pan troglodytes (Chimpanzee).